The sequence spans 345 residues: Achaete-scute complex protein T4 (345 aa).

Low complexity predominate over residues serine 78–proline 92. The interval serine 78 to arginine 109 is disordered. Residues glutamine 99–leucine 162 enclose the bHLH domain.

In terms of assembly, efficient DNA binding requires dimerization with another bHLH protein. Interacts with da (via bHLH motif). Interacts with Bap60. In terms of tissue distribution, l(1)SC, SC and AC strongly label the presumptive stomatogastric nervous system, while ASE is more prominent in the presumptive procephalic lobe. Associates with the somatic nuclei through nuclear cycles 9 and 10. During nuclear cycle 11 distributes uniformly in the embryo.

Its function is as follows. AS-C proteins are involved in the determination of the neuronal precursors in the peripheral nervous system and the central nervous system. Also involved in sex determination and dosage compensation. The polypeptide is Achaete-scute complex protein T4 (sc) (Drosophila melanogaster (Fruit fly)).